A 126-amino-acid chain; its full sequence is Small nuclear ribonucleoprotein Sm D3 (126 aa).

An N-acetylserine modification is found at Ser2. A Sm domain is found at 5–77 (VPIKVLHEAE…IRFLILPDML (73 aa)). 5 tandem repeats follow at residues 110-111 (RG), 112-113 (RG), 114-115 (RG), 116-117 (MG), and 118-119 (RG). The 5 X 2 AA tandem repeats of [RM]-G; required for interaction with SMN1 stretch occupies residues 110 to 119 (RGRGRGMGRG).

This sequence belongs to the snRNP core protein family. As to quaternary structure, core component of the spliceosomal U1, U2, U4 and U5 small nuclear ribonucleoproteins (snRNPs), the building blocks of the spliceosome. Most spliceosomal snRNPs contain a common set of Sm proteins, SNRPB, SNRPD1, SNRPD2, SNRPD3, SNRPE, SNRPF and SNRPG that assemble in a heptameric protein ring on the Sm site of the small nuclear RNA to form the core snRNP. Component of the U1 snRNP. The U1 snRNP is composed of the U1 snRNA and the 7 core Sm proteins SNRPB, SNRPD1, SNRPD2, SNRPD3, SNRPE, SNRPF and SNRPG, and at least three U1 snRNP-specific proteins SNRNP70/U1-70K, SNRPA/U1-A and SNRPC/U1-C. Component of the U4/U6-U5 tri-snRNP complex composed of the U4, U6 and U5 snRNAs and at least PRPF3, PRPF4, PRPF6, PRPF8, PRPF31, SNRNP200, TXNL4A, SNRNP40, SNRPB, SNRPD1, SNRPD2, SNRPD3, SNRPE, SNRPF, SNRPG, DDX23, CD2BP2, PPIH, SNU13, EFTUD2, SART1 and USP39, plus LSM2, LSM3, LSM4, LSM5, LSM6, LSM7 and LSM8. Component of the U7 snRNP complex, or U7 Sm protein core complex, that is composed of the U7 snRNA and at least LSM10, LSM11, SNRPB, SNRPD3, SNRPE, SNRPF and SNRPG; the complex does not contain SNRPD1 and SNRPD2. Component of the minor spliceosome, which splices U12-type introns. Part of the SMN-Sm complex that contains SMN1, GEMIN2/SIP1, DDX20/GEMIN3, GEMIN4, GEMIN5, GEMIN6, GEMIN7, GEMIN8, STRAP/UNRIP and the Sm proteins SNRPB, SNRPD1, SNRPD2, SNRPD3, SNRPE, SNRPF and SNRPG; catalyzes core snRNPs assembly. Forms a 6S pICln-Sm complex composed of CLNS1A/pICln, SNRPD1, SNRPD2, SNRPE, SNRPF and SNRPG; ring-like structure where CLNS1A/pICln mimics additional Sm proteins and which is unable to assemble into the core snRNP. Interacts (via C-terminus) with SMN1 (via Tudor domain); the interaction is direct. Post-translationally, methylated on arginine residues by PRMT5 and PRMT7; probable asymmetric dimethylation which is required for assembly and biogenesis of snRNPs.

The protein resides in the cytoplasm. It is found in the cytosol. The protein localises to the nucleus. Its function is as follows. Plays a role in pre-mRNA splicing as a core component of the spliceosomal U1, U2, U4 and U5 small nuclear ribonucleoproteins (snRNPs), the building blocks of the spliceosome. Component of both the pre-catalytic spliceosome B complex and activated spliceosome C complexes. As a component of the minor spliceosome, involved in the splicing of U12-type introns in pre-mRNAs. As part of the U7 snRNP it is involved in histone pre-mRNA 3'-end processing. The sequence is that of Small nuclear ribonucleoprotein Sm D3 (SNRPD3) from Homo sapiens (Human).